A 726-amino-acid polypeptide reads, in one-letter code: Ribonuclease R (726 aa).

The 329-residue stretch at 262-590 folds into the RNB domain; sequence RIDLRHLPFF…LVHRVIKNLL (329 aa). The 82-residue stretch at 642-723 folds into the S1 motif domain; it reads GDVLTGVISN…NERKIELSLY (82 aa).

This sequence belongs to the RNR ribonuclease family. RNase R subfamily. Monomer.

It localises to the cytoplasm. The catalysed reaction is Exonucleolytic cleavage in the 3'- to 5'-direction to yield nucleoside 5'-phosphates.. 3'-5' exoribonuclease that releases 5'-nucleoside monophosphates and is involved in maturation of structured RNAs. In Buchnera aphidicola subsp. Schizaphis graminum (strain Sg), this protein is Ribonuclease R.